A 342-amino-acid polypeptide reads, in one-letter code: UDP-glucuronic acid decarboxylase 3 (342 aa).

Residues methionine 1 to threonine 11 show a composition bias toward polar residues. Positions methionine 1–asparagine 22 are disordered. Aspartate 61 to aspartate 86 is a binding site for NAD(+). Arginine 170 is a substrate binding site. The active-site Proton acceptor is tyrosine 173. Tyrosine 173 to lysine 177 is a binding site for NAD(+). Asparagine 202 lines the substrate pocket. Arginine 214 lines the NAD(+) pocket. Residues valine 215–phenylalanine 219, glutamine 232–arginine 239, and aspartate 299–arginine 303 each bind substrate.

It belongs to the NAD(P)-dependent epimerase/dehydratase family. UDP-glucuronic acid decarboxylase subfamily. It depends on NAD(+) as a cofactor. In terms of tissue distribution, ubiquitous.

The protein resides in the cytoplasm. It catalyses the reaction UDP-alpha-D-glucuronate + H(+) = UDP-alpha-D-xylose + CO2. It participates in nucleotide-sugar biosynthesis; UDP-alpha-D-xylose biosynthesis; UDP-alpha-D-xylose from UDP-alpha-D-glucuronate: step 1/1. Functionally, catalyzes the NAD-dependent decarboxylation of UDP-glucuronic acid to UDP-xylose. Necessary for the biosynthesis of the core tetrasaccharide in glycosaminoglycan biosynthesis. This is UDP-glucuronic acid decarboxylase 3 (UXS3) from Arabidopsis thaliana (Mouse-ear cress).